The sequence spans 247 residues: MASLGVNIDHIANVRQARRTVEPDPVPMALLAELGGADGITVHLREDRRHIQDRDVDLLRQTVRSRLNLEMAATEDMVLIALRVQPDMVTLVPERREEVTTEGGLDVSSQRVDLTSKISRLQDAGIPVSLFVDPERGQLEACRDCRARWVELHTGTYAEAKWTDQPSELARLTEATALARAMGLRVNAGHGLTYQNVEPVAAIEGMEELNIGHTIVARAVAVGLQQAVREMKALVQNPRRDPLFGSY.

Asn7 is a 3-amino-2-oxopropyl phosphate binding site. Residue 9-10 (DH) coordinates 1-deoxy-D-xylulose 5-phosphate. Residue Arg18 coordinates 3-amino-2-oxopropyl phosphate. The active-site Proton acceptor is the His43. 1-deoxy-D-xylulose 5-phosphate-binding residues include Arg45 and His50. Catalysis depends on Glu70, which acts as the Proton acceptor. Thr100 contacts 1-deoxy-D-xylulose 5-phosphate. Residue His190 is the Proton donor of the active site. Residues Gly191 and 212–213 (GH) each bind 3-amino-2-oxopropyl phosphate.

Belongs to the PNP synthase family. In terms of assembly, homooctamer; tetramer of dimers.

It is found in the cytoplasm. The enzyme catalyses 3-amino-2-oxopropyl phosphate + 1-deoxy-D-xylulose 5-phosphate = pyridoxine 5'-phosphate + phosphate + 2 H2O + H(+). The protein operates within cofactor biosynthesis; pyridoxine 5'-phosphate biosynthesis; pyridoxine 5'-phosphate from D-erythrose 4-phosphate: step 5/5. In terms of biological role, catalyzes the complicated ring closure reaction between the two acyclic compounds 1-deoxy-D-xylulose-5-phosphate (DXP) and 3-amino-2-oxopropyl phosphate (1-amino-acetone-3-phosphate or AAP) to form pyridoxine 5'-phosphate (PNP) and inorganic phosphate. This chain is Pyridoxine 5'-phosphate synthase, found in Synechococcus sp. (strain WH7803).